Reading from the N-terminus, the 982-residue chain is Glutamate [NMDA] receptor subunit 1 (982 aa).

The first 16 residues, 1–16 (MAFAVWFLSTFVIVAA), serve as a signal peptide directing secretion. Residues 17-561 (QRHMALEHEG…TLVSFLQPFS (545 aa)) are Extracellular-facing. N-linked (GlcNAc...) asparagine glycans are attached at residues N247, N303, N334, N386, N443, N470, and N490. Glycine contacts are provided by residues 518–520 (PLT) and R525. A helical membrane pass occupies residues 562–582 (NTLWILVMVSVHVVALVLYLL). Topologically, residues 583–639 (DRFSPFGRFKLSHSDSNEEKALNLSSAVWFAWGVLLNSGIGEGTPRSFSARVLGMVW) are cytoplasmic. Residues 640–660 (AGFAMIIVASYTANLAAFLVL) form a helical membrane-spanning segment. Residues 661–819 (ERPKTKLSGI…KTPNTLGLKN (159 aa)) are Extracellular-facing. A glycan (N-linked (GlcNAc...) asparagine) is linked at N681. Residues S691 and D735 each contribute to the glycine site. The chain crosses the membrane as a helical span at residues 820 to 840 (MAGVFILVGVGIAGGVGLIII). Residues 841–982 (EVIYKKHQVK…YTSDVSHLVV (142 aa)) are Cytoplasmic-facing. The disordered stretch occupies residues 934-982 (EIGKPGQSPKVIGGPPHPMLGKTRPQAQQNLLPPRYSPGYTSDVSHLVV). Over residues 972–982 (GYTSDVSHLVV) the composition is skewed to polar residues.

It belongs to the glutamate-gated ion channel (TC 1.A.10.1) family. As to quaternary structure, forms a heteromeric NMDA channel with Nmdar2.

It is found in the cell membrane. It localises to the postsynaptic cell membrane. Its subcellular location is the postsynaptic density. In terms of biological role, NMDA receptor subtype of glutamate-gated ion channels with high calcium permeability and voltage-dependent sensitivity to magnesium. Mediated by glycine. This protein plays a key role in synaptic plasticity, synaptogenesis, excitotoxicity, memory acquisition and learning. It mediates neuronal functions in glutamate neurotransmission. Is involved in the cell surface targeting of NMDA receptors. Plays a role in associative learning and in long-term memory consolidation. This is Glutamate [NMDA] receptor subunit 1 from Drosophila willistoni (Fruit fly).